Consider the following 57-residue polypeptide: High light-inducible protein HliD (57 aa).

Residues 25 to 30 carry the Chlorophyll-binding motif motif; sequence EKLNGR. Residues 25–46 form a helical membrane-spanning segment; that stretch reads EKLNGRAAMVGFLLILVIEYFT.

The protein belongs to the Hlip family. In terms of assembly, probably forms dimers which bind 6 chlorophyll a and 2 beta-carotenoid molecules. Cofractionates in an approximately 50 kDa fraction of the thylakoid membrane with HliC. Does not associate with mature PSII. Purified in several chlorophyll- and carotenoid-containing complexes, including photosystem II (PSII) assembly intermediate complex RCII* (iD1, D1, D2, PsbE, PsbF, PsbI, Ycf39, Ycf48, HliC and HliD) and the Ycf39-Hlip complex (Ycf39, HliC, HliD and pigments).

Its subcellular location is the cellular thylakoid membrane. In terms of biological role, involved in photosystem II (PSII) assembly and/or repair under high light stress. Required for binding of chlorophyll and carotenoids by the Ycf39-Hlip complex. The Ycf39-Hlip complex binds D1 at an early stage of PSII assembly along with Ycf48, ribosomes and ChlG, the last enzyme in chlorophyll biosynthesis; it may be involved in chlorophyll reuse and delivery to D1 in the initial stages of PSII assembly. Binds chlorophyll a and beta-carotenoid in a 3:1 stoichiometry in the presence and absence of Yfc39; in the Ycf39-HliC-HliD complex, HliD binds all the pigment. The Ycf39-Hlip complex efficiently quenches chlorophyll fluorescence, contributing to photoprotection. Deletion of 4 to 5 members of the Hlip family suggests the proteins are involved in regulation of chlorophyll biosynthesis, in stabilization of chlorophyll-binding proteins and/or in reuse of chlorophylls, and may regulate tetrapyrrole biosynthesis. Might bind chlorophyll and/or carotenoids in association with HliC (called the ScpBE pair). Its function is as follows. The Hlips might regulate tetrapyrrole biosynthesis, maybe at the level of aminolevulinic acid synthesis and probably stabilize PSII assembly intermediates. In Synechocystis sp. (strain ATCC 27184 / PCC 6803 / Kazusa), this protein is High light-inducible protein HliD (hliD).